A 363-amino-acid chain; its full sequence is Chorismate synthase (363 aa).

2 residues coordinate NADP(+): Arg-48 and Arg-54. Residues 125–127 (RSS), 237–238 (NA), Gly-277, 292–296 (KPTSS), and Arg-318 contribute to the FMN site.

The protein belongs to the chorismate synthase family. In terms of assembly, homotetramer. The cofactor is FMNH2.

It carries out the reaction 5-O-(1-carboxyvinyl)-3-phosphoshikimate = chorismate + phosphate. Its pathway is metabolic intermediate biosynthesis; chorismate biosynthesis; chorismate from D-erythrose 4-phosphate and phosphoenolpyruvate: step 7/7. Its function is as follows. Catalyzes the anti-1,4-elimination of the C-3 phosphate and the C-6 proR hydrogen from 5-enolpyruvylshikimate-3-phosphate (EPSP) to yield chorismate, which is the branch point compound that serves as the starting substrate for the three terminal pathways of aromatic amino acid biosynthesis. This reaction introduces a second double bond into the aromatic ring system. The polypeptide is Chorismate synthase (Pseudomonas entomophila (strain L48)).